We begin with the raw amino-acid sequence, 122 residues long: uncharacterized protein (122 aa).

T55 bears the Phosphothreonine mark. A phosphoserine mark is found at S72, S86, S96, S112, and S118.

It localises to the cytoplasm. This is an uncharacterized protein from Homo sapiens (Human).